The primary structure comprises 261 residues: MSESLHLTRNGPILEITLDRPKANAIDAKTSFAMGEAFLNFRDDPELRVAIITGGGEKFFSAGWDLKAAAEGEAPDADFGPGGFAGLTEIFDLDKPVIAAVNGYAFGGGFELALAADFIVCAENASFALPEAKLGIVPDSGGVLRLPKLLPPAIVNEMVMTGRRMSAEEALRWGVVNRVVSQSELMDSARELAQQLVNSAPLAIAALKEIYRATSEMPVEEGYRYIRSGVLKHYPSVLHSEDALEGPQAFAEKRDPVWKGR.

Residue E111 is the Nucleophile of the active site. The Proton acceptor role is filled by E131.

Belongs to the enoyl-CoA hydratase/isomerase family.

It catalyses the reaction (R)-carnitinyl-CoA = crotonobetainyl-CoA + H2O. The protein operates within amine and polyamine metabolism; carnitine metabolism. Its function is as follows. Catalyzes the reversible dehydration of L-carnitinyl-CoA to crotonobetainyl-CoA. This chain is Carnitinyl-CoA dehydratase, found in Salmonella dublin (strain CT_02021853).